The sequence spans 523 residues: Rho guanine nucleotide exchange factor 8 (523 aa).

Polar residues predominate over residues 44–57 (VESNTPESQNSDSF). Disordered regions lie at residues 44–83 (VESN…ERQQ) and 442–523 (ETSD…KDRH). One can recognise a PRONE domain in the interval 76 to 440 (GKRSERQQAD…TLALKQTLLA (365 aa)). Basic and acidic residues predominate over residues 465-475 (EAEKHDPHSKT).

Homodimer. The homodimer interacts with ARAC5/ROP4. Interacts with ARAC11/ROP1 and ARAC10/ROP11. Interacts with PRK6. As to expression, expressed in pollen grains and pollen tubes.

The protein localises to the cell membrane. Its function is as follows. Guanine-nucleotide exchange factor (GEF) that acts as an activator of Rop (Rho of plants) GTPases by promoting the exchange of GDP for GTP. Active as homodimer. This Arabidopsis thaliana (Mouse-ear cress) protein is Rho guanine nucleotide exchange factor 8.